The sequence spans 543 residues: CTP synthase (543 aa).

Positions 1–267 (MKQTKYIFVT…LNPIAEILDL (267 aa)) are amidoligase domain. Residue serine 15 coordinates CTP. Serine 15 contributes to the UTP binding site. ATP-binding positions include 16 to 21 (SLGKGI) and aspartate 73. Aspartate 73 and glutamate 141 together coordinate Mg(2+). Residues 148 to 150 (DIE), 188 to 193 (KTKPTQ), and lysine 224 each bind CTP. Residues 188 to 193 (KTKPTQ) and lysine 224 each bind UTP. In terms of domain architecture, Glutamine amidotransferase type-1 spans 292-543 (KIAFVGKYVD…IKAAINYEDN (252 aa)). Residue glycine 354 participates in L-glutamine binding. Cysteine 381 acts as the Nucleophile; for glutamine hydrolysis in catalysis. L-glutamine-binding positions include 382–385 (LGMQ), glutamate 405, and arginine 473. Active-site residues include histidine 516 and glutamate 518.

The protein belongs to the CTP synthase family. As to quaternary structure, homotetramer.

It carries out the reaction UTP + L-glutamine + ATP + H2O = CTP + L-glutamate + ADP + phosphate + 2 H(+). The catalysed reaction is L-glutamine + H2O = L-glutamate + NH4(+). The enzyme catalyses UTP + NH4(+) + ATP = CTP + ADP + phosphate + 2 H(+). It participates in pyrimidine metabolism; CTP biosynthesis via de novo pathway; CTP from UDP: step 2/2. Allosterically activated by GTP, when glutamine is the substrate; GTP has no effect on the reaction when ammonia is the substrate. The allosteric effector GTP functions by stabilizing the protein conformation that binds the tetrahedral intermediate(s) formed during glutamine hydrolysis. Inhibited by the product CTP, via allosteric rather than competitive inhibition. Functionally, catalyzes the ATP-dependent amination of UTP to CTP with either L-glutamine or ammonia as the source of nitrogen. Regulates intracellular CTP levels through interactions with the four ribonucleotide triphosphates. This chain is CTP synthase, found in Campylobacter jejuni subsp. doylei (strain ATCC BAA-1458 / RM4099 / 269.97).